The following is a 595-amino-acid chain: Chaperone protein HscA homolog (595 aa).

The protein belongs to the heat shock protein 70 family.

Its function is as follows. Chaperone involved in the maturation of iron-sulfur cluster-containing proteins. Has a low intrinsic ATPase activity which is markedly stimulated by HscB. This is Chaperone protein HscA homolog from Rickettsia africae (strain ESF-5).